The sequence spans 198 residues: NADH-quinone oxidoreductase subunit C (198 aa).

It belongs to the complex I 30 kDa subunit family. NDH-1 is composed of 14 different subunits. Subunits NuoB, C, D, E, F, and G constitute the peripheral sector of the complex.

It localises to the cell inner membrane. The catalysed reaction is a quinone + NADH + 5 H(+)(in) = a quinol + NAD(+) + 4 H(+)(out). NDH-1 shuttles electrons from NADH, via FMN and iron-sulfur (Fe-S) centers, to quinones in the respiratory chain. The immediate electron acceptor for the enzyme in this species is believed to be ubiquinone. Couples the redox reaction to proton translocation (for every two electrons transferred, four hydrogen ions are translocated across the cytoplasmic membrane), and thus conserves the redox energy in a proton gradient. In Chromobacterium violaceum (strain ATCC 12472 / DSM 30191 / JCM 1249 / CCUG 213 / NBRC 12614 / NCIMB 9131 / NCTC 9757 / MK), this protein is NADH-quinone oxidoreductase subunit C.